We begin with the raw amino-acid sequence, 629 residues long: Phosphomethylpyrimidine synthase (629 aa).

Polar residues predominate over residues 1–13; that stretch reads MTTKSKNAINLSD. The tract at residues 1–22 is disordered; that stretch reads MTTKSKNAINLSDSAKVDEQSV. Substrate is bound by residues Asn233, Met262, Tyr291, His327, 347 to 349, 388 to 391, and Glu427; these read SRG and DGLR. Residue His431 coordinates Zn(2+). A substrate-binding site is contributed by Tyr454. A Zn(2+)-binding site is contributed by His495. [4Fe-4S] cluster contacts are provided by Cys575, Cys578, and Cys583.

The protein belongs to the ThiC family. Homodimer. [4Fe-4S] cluster serves as cofactor.

It carries out the reaction 5-amino-1-(5-phospho-beta-D-ribosyl)imidazole + S-adenosyl-L-methionine = 4-amino-2-methyl-5-(phosphooxymethyl)pyrimidine + CO + 5'-deoxyadenosine + formate + L-methionine + 3 H(+). It participates in cofactor biosynthesis; thiamine diphosphate biosynthesis. Its function is as follows. Catalyzes the synthesis of the hydroxymethylpyrimidine phosphate (HMP-P) moiety of thiamine from aminoimidazole ribotide (AIR) in a radical S-adenosyl-L-methionine (SAM)-dependent reaction. This chain is Phosphomethylpyrimidine synthase, found in Pseudomonas fluorescens (strain Pf0-1).